A 204-amino-acid chain; its full sequence is Shikimate kinase (204 aa).

Position 35 to 40 (35 to 40 (ASGKST)) interacts with ATP. Ser-39 is a Mg(2+) binding site. Substrate contacts are provided by Asp-57, Arg-81, and Gly-103. Residue Arg-142 participates in ATP binding. Residue Arg-169 participates in substrate binding.

Belongs to the shikimate kinase family. Monomer. Mg(2+) serves as cofactor.

It localises to the cytoplasm. The enzyme catalyses shikimate + ATP = 3-phosphoshikimate + ADP + H(+). It functions in the pathway metabolic intermediate biosynthesis; chorismate biosynthesis; chorismate from D-erythrose 4-phosphate and phosphoenolpyruvate: step 5/7. In terms of biological role, catalyzes the specific phosphorylation of the 3-hydroxyl group of shikimic acid using ATP as a cosubstrate. In Salinibacter ruber (strain DSM 13855 / M31), this protein is Shikimate kinase.